A 337-amino-acid polypeptide reads, in one-letter code: UDP-3-O-acylglucosamine N-acyltransferase (337 aa).

H238 serves as the catalytic Proton acceptor.

It belongs to the transferase hexapeptide repeat family. LpxD subfamily. As to quaternary structure, homotrimer.

The enzyme catalyses a UDP-3-O-[(3R)-3-hydroxyacyl]-alpha-D-glucosamine + a (3R)-hydroxyacyl-[ACP] = a UDP-2-N,3-O-bis[(3R)-3-hydroxyacyl]-alpha-D-glucosamine + holo-[ACP] + H(+). It functions in the pathway bacterial outer membrane biogenesis; LPS lipid A biosynthesis. Functionally, catalyzes the N-acylation of UDP-3-O-acylglucosamine using 3-hydroxyacyl-ACP as the acyl donor. Is involved in the biosynthesis of lipid A, a phosphorylated glycolipid that anchors the lipopolysaccharide to the outer membrane of the cell. This Xanthomonas campestris pv. campestris (strain 8004) protein is UDP-3-O-acylglucosamine N-acyltransferase.